A 679-amino-acid polypeptide reads, in one-letter code: Translation initiation factor IF-2 (679 aa).

One can recognise a tr-type G domain in the interval 178-347; that stretch reads KRPPIITVMG…LLTSEMQELK (170 aa). The segment at 187–194 is G1; that stretch reads GHVDHGKT. GTP is bound at residue 187–194; that stretch reads GHVDHGKT. The G2 stretch occupies residues 212–216; sequence GITQH. The segment at 233-236 is G3; sequence DTPG. GTP is bound by residues 233–237 and 287–290; these read DTPGH and NKMD. The tract at residues 287–290 is G4; sequence NKMD. The G5 stretch occupies residues 323 to 325; the sequence is SAK.

This sequence belongs to the TRAFAC class translation factor GTPase superfamily. Classic translation factor GTPase family. IF-2 subfamily.

It is found in the cytoplasm. In terms of biological role, one of the essential components for the initiation of protein synthesis. Protects formylmethionyl-tRNA from spontaneous hydrolysis and promotes its binding to the 30S ribosomal subunits. Also involved in the hydrolysis of GTP during the formation of the 70S ribosomal complex. The protein is Translation initiation factor IF-2 of Clostridium perfringens (strain ATCC 13124 / DSM 756 / JCM 1290 / NCIMB 6125 / NCTC 8237 / Type A).